Here is a 293-residue protein sequence, read N- to C-terminus: Shikimate dehydrogenase (NADP(+)) (293 aa).

Residues 26 to 28 and T73 contribute to the shikimate site; that span reads SKS. Catalysis depends on K77, which acts as the Proton acceptor. NADP(+) is bound at residue D89. N98 and D113 together coordinate shikimate. NADP(+) is bound by residues 137 to 141, 161 to 166, and I231; these read GAGGA and NRTKQR. Shikimate is bound at residue Y233. G254 is an NADP(+) binding site.

This sequence belongs to the shikimate dehydrogenase family. In terms of assembly, homodimer.

The enzyme catalyses shikimate + NADP(+) = 3-dehydroshikimate + NADPH + H(+). The protein operates within metabolic intermediate biosynthesis; chorismate biosynthesis; chorismate from D-erythrose 4-phosphate and phosphoenolpyruvate: step 4/7. Involved in the biosynthesis of the chorismate, which leads to the biosynthesis of aromatic amino acids. Catalyzes the reversible NADPH linked reduction of 3-dehydroshikimate (DHSA) to yield shikimate (SA). The chain is Shikimate dehydrogenase (NADP(+)) from Bartonella henselae (strain ATCC 49882 / DSM 28221 / CCUG 30454 / Houston 1) (Rochalimaea henselae).